The following is a 108-amino-acid chain: Peptidyl-prolyl cis-trans isomerase FKBP1B (108 aa).

The PPIase FKBP-type domain occupies 20–108; sequence GQTCVVHYTG…IFDVELLNLE (89 aa).

As to quaternary structure, identified in a complex composed of RYR2, FKBP1B, PKA catalytic subunit, PRKAR2A, AKAP6, and the protein phosphatases PP2A and PP1. Interacts directly with RYR2.

The protein resides in the cytoplasm. Its subcellular location is the sarcoplasmic reticulum. It catalyses the reaction [protein]-peptidylproline (omega=180) = [protein]-peptidylproline (omega=0). Its activity is regulated as follows. Inhibited by both FK506 and rapamycin. Functionally, has the potential to contribute to the immunosuppressive and toxic effects of FK506 and rapamycin. PPIases accelerate the folding of proteins. It catalyzes the cis-trans isomerization of proline imidic peptide bonds in oligopeptides. This is Peptidyl-prolyl cis-trans isomerase FKBP1B (FKBP1B) from Bos taurus (Bovine).